Reading from the N-terminus, the 826-residue chain is Putative pentatricopeptide repeat-containing protein At1g13630 (826 aa).

PPR repeat units lie at residues 228–262, 263–297, 298–332, 333–367, 368–402, 404–438, 439–473, 474–508, 509–543, 544–578, 579–613, 614–648, 661–695, 696–730, 731–765, and 766–800; these read NEHT…DIGP, SVVS…GLVP, SVYS…GVEP, DSVT…GLSP, DVIT…GFEL, SIIP…GLSP, DLVA…RILP, NSRT…GETL, DIVL…GITP, SVAT…GLAP, SVVS…GIPP, TNVT…KCKQ, DQIT…NLDA, SSAT…NVSL, SKFA…GFNV, and SIRD…GISP.

It belongs to the PPR family. P subfamily.

The polypeptide is Putative pentatricopeptide repeat-containing protein At1g13630 (Arabidopsis thaliana (Mouse-ear cress)).